The sequence spans 226 residues: NAD(P)H-hydrate epimerase (226 aa).

In terms of domain architecture, YjeF N-terminal spans 10–215 (AIELDLDLFE…ALQRKYQLNL (206 aa)). Position 58 to 62 (58 to 62 (NNGGD)) interacts with (6S)-NADPHX. K(+) contacts are provided by asparagine 59 and aspartate 123. (6S)-NADPHX is bound by residues 127 to 133 (GFGFKPP) and aspartate 156. Position 159 (serine 159) interacts with K(+).

The protein belongs to the NnrE/AIBP family. The cofactor is K(+).

It catalyses the reaction (6R)-NADHX = (6S)-NADHX. It carries out the reaction (6R)-NADPHX = (6S)-NADPHX. Functionally, catalyzes the epimerization of the S- and R-forms of NAD(P)HX, a damaged form of NAD(P)H that is a result of enzymatic or heat-dependent hydration. This is a prerequisite for the S-specific NAD(P)H-hydrate dehydratase to allow the repair of both epimers of NAD(P)HX. The chain is NAD(P)H-hydrate epimerase from Drosophila persimilis (Fruit fly).